The primary structure comprises 382 residues: D-alanine--D-alanine ligase (382 aa).

Residues 161–372 (KVVFESAGLH…YAELIDELIH (212 aa)) enclose the ATP-grasp domain. An ATP-binding site is contributed by 193-248 (VDRLGFPVFVKPARAGSSMGISKVDSLEGLDAAIEEARRHDLKLVIEAGIVGREIE). Mg(2+)-binding residues include Asp-326, Glu-339, and Asn-341.

This sequence belongs to the D-alanine--D-alanine ligase family. Mg(2+) is required as a cofactor. Mn(2+) serves as cofactor.

It is found in the cytoplasm. The enzyme catalyses 2 D-alanine + ATP = D-alanyl-D-alanine + ADP + phosphate + H(+). The protein operates within cell wall biogenesis; peptidoglycan biosynthesis. Its function is as follows. Cell wall formation. This is D-alanine--D-alanine ligase from Pseudarthrobacter chlorophenolicus (strain ATCC 700700 / DSM 12829 / CIP 107037 / JCM 12360 / KCTC 9906 / NCIMB 13794 / A6) (Arthrobacter chlorophenolicus).